A 699-amino-acid chain; its full sequence is UvrABC system protein C (699 aa).

The span at 1–51 (MIQHPTDTPEVAADAAAEPERAAGAAGATPQPSQDAVEPAADVDAATASLA) shows a compositional bias: low complexity. The interval 1-59 (MIQHPTDTPEVAADAAAEPERAAGAAGATPQPSQDAVEPAADVDAATASLAAEDDDEPV) is disordered. Residues 92–170 (TSPGVYRMLN…IKQLRPRFNV (79 aa)) form the GIY-YIG domain. Residues 280 to 315 (RLVKQELAGEMEKASAELEFETAALYRDRLAALSAI) enclose the UVR domain.

It belongs to the UvrC family. Interacts with UvrB in an incision complex.

The protein resides in the cytoplasm. Its function is as follows. The UvrABC repair system catalyzes the recognition and processing of DNA lesions. UvrC both incises the 5' and 3' sides of the lesion. The N-terminal half is responsible for the 3' incision and the C-terminal half is responsible for the 5' incision. The protein is UvrABC system protein C of Rhodopseudomonas palustris (strain BisB18).